The primary structure comprises 123 residues: Large ribosomal subunit protein bL12 (123 aa).

Belongs to the bacterial ribosomal protein bL12 family. Homodimer. Part of the ribosomal stalk of the 50S ribosomal subunit. Forms a multimeric L10(L12)X complex, where L10 forms an elongated spine to which 2 to 4 L12 dimers bind in a sequential fashion. Binds GTP-bound translation factors.

Forms part of the ribosomal stalk which helps the ribosome interact with GTP-bound translation factors. Is thus essential for accurate translation. This is Large ribosomal subunit protein bL12 from Haemophilus influenzae (strain 86-028NP).